A 532-amino-acid chain; its full sequence is Arginine--tRNA ligase (532 aa).

Residues 122–132 carry the 'HIGH' region motif; sequence ANPTGPLHVAS.

Belongs to the class-I aminoacyl-tRNA synthetase family. As to quaternary structure, monomer.

Its subcellular location is the cytoplasm. The enzyme catalyses tRNA(Arg) + L-arginine + ATP = L-arginyl-tRNA(Arg) + AMP + diphosphate. The polypeptide is Arginine--tRNA ligase (Elusimicrobium minutum (strain Pei191)).